Reading from the N-terminus, the 233-residue chain is MNSYLQFPHRKLFIQFSYSLTSVFRKCQSRTFMNSQFASAKLSNSIKKYFDGRIDESIKYQEIFIRGLENKGKLSKTSLVEALARVRAKPETVLYKVADPNENNKYPICSIISYTELSKLRENQSSRLREAEKSKHKNKTRTRYVLFSWRTDVNDIERKLKSVKDFLQDGNIVEIHVQNKKRSQPVSQEVRDSILSKIQLEIEGLGKDMKPPIVNSHSATFLLQPLVSKSSEL.

Residues 1–39 (MNSYLQFPHRKLFIQFSYSLTSVFRKCQSRTFMNSQFAS) constitute a mitochondrion transit peptide.

It belongs to the IF-3 family.

The protein resides in the mitochondrion. Its function is as follows. May be involved in mitochondrial translation initiation. This Schizosaccharomyces pombe (strain 972 / ATCC 24843) (Fission yeast) protein is Probable translation initiation factor, mitochondrial.